We begin with the raw amino-acid sequence, 220 residues long: Deoxyribose-phosphate aldolase 1 (220 aa).

Aspartate 89 acts as the Proton donor/acceptor in catalysis. Lysine 151 functions as the Schiff-base intermediate with acetaldehyde in the catalytic mechanism. Residue lysine 180 is the Proton donor/acceptor of the active site.

The protein belongs to the DeoC/FbaB aldolase family. DeoC type 1 subfamily.

The protein localises to the cytoplasm. It catalyses the reaction 2-deoxy-D-ribose 5-phosphate = D-glyceraldehyde 3-phosphate + acetaldehyde. Its pathway is carbohydrate degradation; 2-deoxy-D-ribose 1-phosphate degradation; D-glyceraldehyde 3-phosphate and acetaldehyde from 2-deoxy-alpha-D-ribose 1-phosphate: step 2/2. Functionally, catalyzes a reversible aldol reaction between acetaldehyde and D-glyceraldehyde 3-phosphate to generate 2-deoxy-D-ribose 5-phosphate. This Staphylococcus aureus (strain MSSA476) protein is Deoxyribose-phosphate aldolase 1.